We begin with the raw amino-acid sequence, 73 residues long: Protein SlyX homolog (73 aa).

Belongs to the SlyX family.

This Histophilus somni (strain 129Pt) (Haemophilus somnus) protein is Protein SlyX homolog.